The primary structure comprises 97 residues: MKCICSIYKSPRRREMYLYVAKKDALSRVPEGLLAAFGTPQHAFDLVLMPERRLAREDIHKVLENLEKQGYHLQMPPPEEEYVEHLPDELLRMNDPV.

The 85-residue stretch at 3–87 folds into the YcgL domain; that stretch reads CICSIYKSPR…PEEEYVEHLP (85 aa).

This chain is YcgL domain-containing protein Avin_32960, found in Azotobacter vinelandii (strain DJ / ATCC BAA-1303).